The primary structure comprises 345 residues: UDP-N-acetylenolpyruvoylglucosamine reductase (345 aa).

The FAD-binding PCMH-type domain maps to 16–185 (VNAFAKSVVT…VSVGLRLCKK (170 aa)). The active site involves arginine 162. Catalysis depends on serine 231, which acts as the Proton donor. Glutamate 328 is a catalytic residue.

It belongs to the MurB family. Requires FAD as cofactor.

The protein resides in the cytoplasm. It carries out the reaction UDP-N-acetyl-alpha-D-muramate + NADP(+) = UDP-N-acetyl-3-O-(1-carboxyvinyl)-alpha-D-glucosamine + NADPH + H(+). The protein operates within cell wall biogenesis; peptidoglycan biosynthesis. Its function is as follows. Cell wall formation. In Blochmanniella pennsylvanica (strain BPEN), this protein is UDP-N-acetylenolpyruvoylglucosamine reductase.